The primary structure comprises 135 residues: Ribosome-binding factor A (135 aa).

The protein belongs to the RbfA family. Monomer. Binds 30S ribosomal subunits, but not 50S ribosomal subunits or 70S ribosomes.

It localises to the cytoplasm. Its function is as follows. One of several proteins that assist in the late maturation steps of the functional core of the 30S ribosomal subunit. Associates with free 30S ribosomal subunits (but not with 30S subunits that are part of 70S ribosomes or polysomes). Required for efficient processing of 16S rRNA. May interact with the 5'-terminal helix region of 16S rRNA. This Methylobacterium nodulans (strain LMG 21967 / CNCM I-2342 / ORS 2060) protein is Ribosome-binding factor A.